A 457-amino-acid chain; its full sequence is UDP-N-acetylglucosamine 1-carboxyvinyltransferase (457 aa).

34 to 35 contacts phosphoenolpyruvate; sequence KN. Arg104 provides a ligand contact to UDP-N-acetyl-alpha-D-glucosamine. Cys128 functions as the Proton donor in the catalytic mechanism. A 2-(S-cysteinyl)pyruvic acid O-phosphothioketal modification is found at Cys128. UDP-N-acetyl-alpha-D-glucosamine-binding residues include Asp319 and Ile341. Residues 436-457 are disordered; it reads INKSKNRSSNSKLKEVSEIRAA. Positions 447-457 are enriched in basic and acidic residues; the sequence is KLKEVSEIRAA.

The protein belongs to the EPSP synthase family. MurA subfamily.

It localises to the cytoplasm. It catalyses the reaction phosphoenolpyruvate + UDP-N-acetyl-alpha-D-glucosamine = UDP-N-acetyl-3-O-(1-carboxyvinyl)-alpha-D-glucosamine + phosphate. The protein operates within cell wall biogenesis; peptidoglycan biosynthesis. Its function is as follows. Cell wall formation. Adds enolpyruvyl to UDP-N-acetylglucosamine. The chain is UDP-N-acetylglucosamine 1-carboxyvinyltransferase from Prochlorococcus marinus subsp. pastoris (strain CCMP1986 / NIES-2087 / MED4).